A 30-amino-acid polypeptide reads, in one-letter code: 2S seed storage-like protein (30 aa).

It belongs to the 2S seed storage albumins family. As to quaternary structure, the mature protein is a heterodimer of a small and a large chain linked by 2 disulfide bonds. In terms of tissue distribution, extracted from castor bean.

This is a 2S seed storage protein. Inhibits spore germination in R.solani and F.oxysporum. Exhibits anti-trypsin activity. This is 2S seed storage-like protein from Ricinus communis (Castor bean).